Here is a 320-residue protein sequence, read N- to C-terminus: Cytochrome f (320 aa).

A signal peptide spans 1–35 (MQTRNTFSWIKEEITRSISVSLMIYIITGASISNA). Residues Y36, C56, C59, and H60 each coordinate heme. The helical transmembrane segment at 286–306 (VQGLLFFLASIVFAQIFLVLK) threads the bilayer.

Belongs to the cytochrome f family. The 4 large subunits of the cytochrome b6-f complex are cytochrome b6, subunit IV (17 kDa polypeptide, petD), cytochrome f and the Rieske protein, while the 4 small subunits are PetG, PetL, PetM and PetN. The complex functions as a dimer. Requires heme as cofactor.

It is found in the plastid. The protein resides in the chloroplast thylakoid membrane. Its function is as follows. Component of the cytochrome b6-f complex, which mediates electron transfer between photosystem II (PSII) and photosystem I (PSI), cyclic electron flow around PSI, and state transitions. This is Cytochrome f from Gossypium barbadense (Sea Island cotton).